A 252-amino-acid chain; its full sequence is uncharacterized protein (252 aa).

Residues 3-58 (AKDRIQAIKQMVANDKKVTVSNLSGIFQVTEETIRRDLEKLEDEGFLTRTYGGAVL) form the HTH deoR-type domain. The segment at residues 20 to 39 (VTVSNLSGIFQVTEETIRRD) is a DNA-binding region (H-T-H motif).

This is an uncharacterized protein from Escherichia coli (strain K12).